A 517-amino-acid chain; its full sequence is Ribonuclease Y (517 aa).

A helical transmembrane segment spans residues 1–21; that stretch reads MIESLIALIAAIVGLGIGYLV. Residues 207 to 273 enclose the KH domain; sequence LINVINIKND…TKVIELLVED (67 aa). The HD domain maps to 333 to 426; it reads ALAHSLEVAH…VCAADTLSAA (94 aa).

The protein belongs to the RNase Y family.

Its subcellular location is the cell membrane. In terms of biological role, endoribonuclease that initiates mRNA decay. The chain is Ribonuclease Y from Campylobacter jejuni subsp. jejuni serotype O:2 (strain ATCC 700819 / NCTC 11168).